The sequence spans 78 residues: Exodeoxyribonuclease 7 small subunit (78 aa).

The protein belongs to the XseB family. As to quaternary structure, heterooligomer composed of large and small subunits.

It localises to the cytoplasm. The catalysed reaction is Exonucleolytic cleavage in either 5'- to 3'- or 3'- to 5'-direction to yield nucleoside 5'-phosphates.. Functionally, bidirectionally degrades single-stranded DNA into large acid-insoluble oligonucleotides, which are then degraded further into small acid-soluble oligonucleotides. The sequence is that of Exodeoxyribonuclease 7 small subunit from Pediococcus pentosaceus (strain ATCC 25745 / CCUG 21536 / LMG 10740 / 183-1w).